The primary structure comprises 89 residues: UPF0367 protein PMM0124 (89 aa).

Belongs to the UPF0367 family.

The chain is UPF0367 protein PMM0124 from Prochlorococcus marinus subsp. pastoris (strain CCMP1986 / NIES-2087 / MED4).